A 430-amino-acid polypeptide reads, in one-letter code: Purine nucleoside phosphorylase LACC1 (430 aa).

At Lys247 the chain carries N6-acetyllysine. His250, Cys284, and His301 together coordinate Zn(2+).

The protein belongs to the purine nucleoside phosphorylase YfiH/LACC1 family. In terms of assembly, interacts with FASN. Interacts with SDHA. Interacts with ATF6, EIF2AK3 and ERN1. Phosphorylated on tyrosine residues. As to expression, ubiquitously expressed, with higher expression levels in immune-related tissues such as lymph nodes and spleen. Expressed in both intestinal and peripheral myeloid-derived cells.

The protein resides in the cytoplasm. Its subcellular location is the nucleus. The protein localises to the endoplasmic reticulum. It localises to the peroxisome. The enzyme catalyses adenosine + phosphate = alpha-D-ribose 1-phosphate + adenine. It carries out the reaction inosine + phosphate = alpha-D-ribose 1-phosphate + hypoxanthine. It catalyses the reaction guanosine + phosphate = alpha-D-ribose 1-phosphate + guanine. The catalysed reaction is S-methyl-5'-thioadenosine + phosphate = 5-(methylsulfanyl)-alpha-D-ribose 1-phosphate + adenine. The enzyme catalyses adenosine + H2O + H(+) = inosine + NH4(+). Its function is as follows. Purine nucleoside enzyme that catalyzes the phosphorolysis of adenosine, guanosine and inosine nucleosides, yielding D-ribose 1-phosphate and the respective free bases, adenine, guanine and hypoxanthine. Also catalyzes the phosphorolysis of S-methyl-5'-thioadenosine into adenine and S-methyl-5-thio-alpha-D-ribose 1-phosphate. Also has adenosine deaminase activity. Acts as a regulator of innate immunity in macrophages by modulating the purine nucleotide metabolism, thereby regulating the metabolic function and bioenergetic state of macrophages. Enables a purine nucleotide cycle between adenosine and inosine monophosphate and adenylosuccinate that prevents cytoplasmic acidification and balances the cytoplasmic-mitochondrial redox interface. The purine nucleotide cycle consumes aspartate and releases fumarate in a manner involving fatty acid oxidation and ATP-citrate lyase activity. Participates in pattern recognition receptor (PRR)-induced cytokines in macrophages: associates with the NOD2-signaling complex and promotes optimal NOD2-induced signaling, cytokine secretion and bacterial clearance. Localizes to the endoplasmic reticulum upon PRR stimulation of macrophages and associates with endoplasmic reticulum-stress sensors, promoting the endoplasmic reticulum unfolded protein response (UPR). Does not show laccase activity. This chain is Purine nucleoside phosphorylase LACC1, found in Homo sapiens (Human).